We begin with the raw amino-acid sequence, 1705 residues long: MELSCSEAPLYGQMMIYAKFDKNVYLPEDAEFYFTYDGSHQRHVMIAERIEDNVLQSSVPGHGLQETVTVSVCLCSEGYSPVTMGSGSVTYVDNMACRLARLLVTQANRLTACSHQTLLTPFALTAGALPALDEELVLALTHLELPLEWTVLGSSSLEVSSHRESLLHLAMRWGLAKLSQFFLCLPGGVQALALPNEEGATPLDLALREGHSKLVEDVTNFQGRWSPSFSRVQLSEEASLHYIHSSETLTLTLNHTAEHLLEADIKLFRKYFWDRAFLVKAFEPEARPEERTAMPSSGAETEEEIKNSVSSRSAAEKEDIKRVKSLVVQHNEHEDQHSLDLDRSFDILKKSKPPSTLLAAGRLSDMLNGGDEVYANCMVIDQVGDLDISYINIEGITATTSPESRGCTLWPQSSKHTLPTETSPSVYPLSENVEGTAHTEAQQSFMSPSSSCASNLNLSFGWHGFEKEQSHLKKRSSSLDALDADSEGEGHSEPSHICYTPGSQSSSRTGIPSGDELDSFETNTEPDFNISRAESLPLSSNLQSKESLLSGVRSRSYSCSSPKISLGKTRLVRELTVCSSSEEQRAYSLSEPPRENRIQEEEWDKYIIPAKSESEKYKVSRTFSFLMNRMTSPRNKSKTKSKDAKDKEKLNRHQFAPGTFSGVLQCLVCDKTLLGKESLQCSNCNANVHKGCKDAAPACTKKFQEKYNKNKPQTILGNSSFRDIPQPGLSLHPSSSVPVGLPTGRRETVGQVHPLSRSVPGTTLESFRRSATSLESESDHNSCRSRSHSDELLQSMGSSPSTESFIMEDVVDSSLWSDLSSDAQEFEAESWSLVVDPSFCNRQEKDVIKRQDVIFELMQTEMHHIQTLFIMSEIFRKGMKEELQLDHSTVDKIFPCLDELLEIHRHFFYSMKERRQESCAGSDRNFVIDRIGDILVQQFSEENASKMKKIYGEFCCHHKEAVNLFKELQQNKKFQNFIKLRNSNLLARRRGIPECILLVTQRITKYPVLVERILQYTKERTEEHKDLRKALCLIKDMIATVDLKVNEYEKNQKWLEILNKIENKTYTKLKNGHVFRKQALMSEERTLLYDGLVYWKTATGRFKDILALLLTDVLLFLQEKDQKYIFAAVDQKPSVISLQKLIAREVANEERGMFLISASSAGPEMYEIHTNSKEERNNWMRRIQQAVESCPEEKGGRTSESDEDKRKAEARVAKIQQCQEILTNQDQQICAYLEEKLHIYAELGELSGFEDVHLEPHLLIKPDPGEPPQAASLLAAALKEAESLQVAVKASQMGAVSQSCEDSCGDSVLADTLSSHDVPGSPTASLVTGGREGRGCSDVDPGIQGVVTDLAVSDAGEKVECRNFPGSSQSEIIQAIQNLTRLLYSLQAALTIQDSHIEIHRLVLQQQEGLSLGHSILRGGPLQDQKSRDADRQHEELANVHQLQHQLQQEQRRWLRRCEQQQRAQATRESWLQERERECQSQEELLLRSRGELDLQLQEYQHSLERLREGQRLVEREQARMRAQQSLLGHWKHGRQRSLPAVLLPGGPEVMELNRSESLCHENSFFINEALVQMSFNTFNKLNPSVIHQDATYPTTQSHSDLVRTSEHQVDLKVDPSQPSNVSHKLWTAAGSGHQILPFHESSKDSCKNDLDTSHTESPTPHDSNSHRPQLQAFITEAKLNLPTRTMTRQDGETGDGAKENIVYL.

Disordered stretches follow at residues 287–316 (RPEE…SAAE) and 473–524 (KKRS…ETNT). Residues Ser-313 and Ser-478 each carry the phosphoserine modification. Residues 501–510 (PGSQSSSRTG) are compositionally biased toward polar residues. Ser-624 carries the post-translational modification Phosphoserine. The segment at 630–649 (MTSPRNKSKTKSKDAKDKEK) is disordered. The segment covering 640–649 (KSKDAKDKEK) has biased composition (basic and acidic residues). The segment at 652-699 (RHQFAPGTFSGVLQCLVCDKTLLGKESLQCSNCNANVHKGCKDAAPAC) adopts a Phorbol-ester/DAG-type zinc-finger fold. Composition is skewed to polar residues over residues 710 to 721 (NKPQTILGNSSF) and 759 to 775 (VPGT…TSLE). Positions 710–800 (NKPQTILGNS…ELLQSMGSSP (91 aa)) are disordered. Over residues 777–791 (ESDHNSCRSRSHSDE) the composition is skewed to basic and acidic residues. Residues 849 to 1044 (KRQDVIFELM…KDMIATVDLK (196 aa)) enclose the DH domain. The PH domain maps to 1086–1188 (TLLYDGLVYW…WMRRIQQAVE (103 aa)). A disordered region spans residues 1187 to 1207 (VESCPEEKGGRTSESDEDKRK). Basic and acidic residues predominate over residues 1191–1207 (PEEKGGRTSESDEDKRK). The interval 1295–1304 (AVSQSCEDSC) is interaction with PTK2/FAK1; required for regulation of axonal branching and synapse formation. Positions 1312–1339 (TLSSHDVPGSPTASLVTGGREGRGCSDV) are disordered. A mediates cytoplasmic retention and interaction with YWHAH region spans residues 1372–1383 (IIQAIQNLTRLL). Positions 1425-1705 (QKSRDADRQH…DGAKENIVYL (281 aa)) are interaction with microtubules. Positions 1488–1525 (RSRGELDLQLQEYQHSLERLREGQRLVEREQARMRAQQ) form a coiled coil. Residues 1496–1527 (QLQEYQHSLERLREGQRLVEREQARMRAQQSL) are RNA-binding. Ser-1538 carries the phosphoserine modification. A mediates cytoplasmic retention and interaction with MAPK8IP1 region spans residues 1566–1579 (FINEALVQMSFNTF). The interval 1638-1705 (PFHESSKDSC…DGAKENIVYL (68 aa)) is disordered. Basic and acidic residues predominate over residues 1641–1655 (ESSKDSCKNDLDTSH). A compositionally biased stretch (polar residues) spans 1656 to 1669 (TESPTPHDSNSHRP). Residues 1688-1699 (TRQDGETGDGAK) show a composition bias toward basic and acidic residues.

As to quaternary structure, homooligomer; forms cytoplasmic aggregates. Forms a complex with MAPK8 and MAPK8IP1. Interacts with RHOA. Interacts with microtubules. Interacts with YWHAE and YWHAH. Interacts with PTK2/FAK1. Interacts with NEFL. Interacts with CTNND2; prevents interaction with RHOA. Post-translationally, phosphorylated on tyrosine upon stimulation of cells by laminin.

The protein resides in the cytoplasm. Its subcellular location is the cell membrane. Functions as a RHOA-specific guanine nucleotide exchange factor regulating signaling pathways downstream of integrins and growth factor receptors. Functions in axonal branching, synapse formation and dendritic morphogenesis. Also functions in focal adhesion formation, cell motility and B-lymphocytes activation. May regulate NEFL expression and aggregation and play a role in apoptosis. This Homo sapiens (Human) protein is Rho guanine nucleotide exchange factor 28 (ARHGEF28).